The following is a 587-amino-acid chain: 65-kDa microtubule-associated protein 1 (587 aa).

Coiled-coil stretches lie at residues 46–84 (QECLDVYKRKVEQAAKSRAELLQTLSDANAELSSLTMSL), 151–181 (DESDLSLKKLDDFQSQLQELQKEKSDRLRKV), 234–257 (LTLKDDKKQRLQKLQELATQLIDL), 290–317 (ALARDLIEQAEVEVDRLDQLKASRMKEI), and 461–489 (AMLDEYGMLRQEREEEKRRLREQKKVQEQ). Residues 474–494 (EEEKRRLREQKKVQEQPHVEQ) show a composition bias toward basic and acidic residues. A disordered region spans residues 474-587 (EEEKRRLREQ…AADHQVPASP (114 aa)). Ser503 is subject to Phosphoserine. Thr526 is modified (phosphothreonine). The span at 531-542 (LSLNANQNGSRS) shows a compositional bias: polar residues. Residues Ser532 and Ser540 each carry the phosphoserine modification. Phosphothreonine is present on residues Thr543 and Thr552. Basic and acidic residues predominate over residues 543–553 (TAKEAGRRETL). Phosphoserine occurs at positions 573, 576, and 586.

It belongs to the MAP65/ASE1 family. In terms of assembly, forms dimer. Binds to MT, mostly with coaligned MT, both between parallel or antiparallel, forming thick bundles. Interacts with the alpha-tubulin subunit of the tubulin heterodimer. Bundles polymerized MT via the formation of 25-nm crossbridges at specific stages of the cell cycle (e.g. bundles microtubules in interphase, anaphase and telophase but does not bind microtubules in prophase or metaphase), at the plus-end, the minus-end, or along the entire length of MT, and along phragmoplast MT. Interacts with SH3P1 and MPK4. Basal phosphorylation at all stages of the cell cycle. MT-binding properties inhibited by hyperphosphorylation mediated by CDKs and/or MAPKs (e.g. ANP2, ANP3, MPK4 and MPK6) during prometaphase and metaphase. In terms of tissue distribution, expressed in all organs and tissues with the exception of sepals and anthers. Bound to subsets of microtubules in the cells of root epidermis, hypocotyl and cotyledons (at protein level).

It localises to the nucleus. The protein resides in the cytoplasm. Its subcellular location is the cytoskeleton. It is found in the spindle. The protein localises to the phragmoplast. It localises to the cell cortex. Its function is as follows. Microtubule-associated protein that bundle and stabilize adjacent microtubules (MT) of the cell cortex. Enhances MT nucleation. Can also bind to tubulin dimers and promotes their polymerization. Confers MT resistance to the drug propyzamide and cold conditions. Plays a role in the central spindle at anaphase to early cytokinesis but is not essential at the midline of the phragmoplast at later stages. Represses metaphase spindle organization and the transition to anaphase in dephosphorylated active form. Promotes the formation of a planar network of antiparallel microtubules. May be involved in stomatal movement modulation by regulating the dynamic and arrangement of cortical MT. This is 65-kDa microtubule-associated protein 1 (MAP65-1) from Arabidopsis thaliana (Mouse-ear cress).